A 71-amino-acid chain; its full sequence is ATP synthase subunit c (71 aa).

The next 2 membrane-spanning stretches (helical) occupy residues 5–25 (GAAIVAGLAAVGGAIAVAIIV) and 47–67 (FIGVPLAEAVPIIAIVMGFLI).

Belongs to the ATPase C chain family. As to quaternary structure, F-type ATPases have 2 components, F(1) - the catalytic core - and F(0) - the membrane proton channel. F(1) has five subunits: alpha(3), beta(3), gamma(1), delta(1), epsilon(1). F(0) has three main subunits: a(1), b(2) and c(10-14). The alpha and beta chains form an alternating ring which encloses part of the gamma chain. F(1) is attached to F(0) by a central stalk formed by the gamma and epsilon chains, while a peripheral stalk is formed by the delta and b chains.

Its subcellular location is the cell membrane. In terms of biological role, f(1)F(0) ATP synthase produces ATP from ADP in the presence of a proton or sodium gradient. F-type ATPases consist of two structural domains, F(1) containing the extramembraneous catalytic core and F(0) containing the membrane proton channel, linked together by a central stalk and a peripheral stalk. During catalysis, ATP synthesis in the catalytic domain of F(1) is coupled via a rotary mechanism of the central stalk subunits to proton translocation. Key component of the F(0) channel; it plays a direct role in translocation across the membrane. A homomeric c-ring of between 10-14 subunits forms the central stalk rotor element with the F(1) delta and epsilon subunits. The protein is ATP synthase subunit c of Alkalihalobacillus alcalophilus (Bacillus alcalophilus).